The following is a 360-amino-acid chain: uncharacterized protein (360 aa).

The ABC transporter domain occupies 4 to 235 (LSLQHIQKIY…PANMFVAGFI (232 aa)). An ATP-binding site is contributed by 37–44 (GPSGCGKS).

The protein belongs to the ABC transporter superfamily.

This is an uncharacterized protein from Escherichia coli O6:H1 (strain CFT073 / ATCC 700928 / UPEC).